The chain runs to 157 residues: S-ribosylhomocysteine lyase (157 aa).

Fe cation is bound by residues His54, His58, and Cys124.

It belongs to the LuxS family. As to quaternary structure, homodimer. It depends on Fe cation as a cofactor.

The enzyme catalyses S-(5-deoxy-D-ribos-5-yl)-L-homocysteine = (S)-4,5-dihydroxypentane-2,3-dione + L-homocysteine. In terms of biological role, involved in the synthesis of autoinducer 2 (AI-2) which is secreted by bacteria and is used to communicate both the cell density and the metabolic potential of the environment. The regulation of gene expression in response to changes in cell density is called quorum sensing. Catalyzes the transformation of S-ribosylhomocysteine (RHC) to homocysteine (HC) and 4,5-dihydroxy-2,3-pentadione (DPD). The sequence is that of S-ribosylhomocysteine lyase from Pediococcus pentosaceus (strain ATCC 25745 / CCUG 21536 / LMG 10740 / 183-1w).